Here is a 219-residue protein sequence, read N- to C-terminus: Cytidylate kinase (219 aa).

21 to 29 (GPAASGKGT) lines the ATP pocket.

It belongs to the cytidylate kinase family. Type 1 subfamily.

It localises to the cytoplasm. The enzyme catalyses CMP + ATP = CDP + ADP. It carries out the reaction dCMP + ATP = dCDP + ADP. This is Cytidylate kinase from Rickettsia conorii (strain ATCC VR-613 / Malish 7).